Here is a 202-residue protein sequence, read N- to C-terminus: Imidazoleglycerol-phosphate dehydratase (202 aa).

This sequence belongs to the imidazoleglycerol-phosphate dehydratase family. In terms of assembly, homotrimer.

It carries out the reaction D-erythro-1-(imidazol-4-yl)glycerol 3-phosphate = 3-(imidazol-4-yl)-2-oxopropyl phosphate + H2O. It functions in the pathway amino-acid biosynthesis; L-histidine biosynthesis; L-histidine from 5-phospho-alpha-D-ribose 1-diphosphate: step 6/9. This is Imidazoleglycerol-phosphate dehydratase (HIS3) from Cryptococcus neoformans var. neoformans serotype D (strain B-3501A) (Filobasidiella neoformans).